The primary structure comprises 151 residues: Small ribosomal subunit protein uS9 (151 aa).

This sequence belongs to the universal ribosomal protein uS9 family.

In Aeropyrum pernix (strain ATCC 700893 / DSM 11879 / JCM 9820 / NBRC 100138 / K1), this protein is Small ribosomal subunit protein uS9 (rps9).